A 299-amino-acid chain; its full sequence is Ribosomal protein uL3 glutamine methyltransferase (299 aa).

This sequence belongs to the protein N5-glutamine methyltransferase family. PrmB subfamily.

The enzyme catalyses L-glutaminyl-[ribosomal protein uL3] + S-adenosyl-L-methionine = N(5)-methyl-L-glutaminyl-[ribosomal protein uL3] + S-adenosyl-L-homocysteine + H(+). In terms of biological role, methylates large ribosomal subunit protein uL3 on a specific glutamine residue. The sequence is that of Ribosomal protein uL3 glutamine methyltransferase from Neisseria gonorrhoeae (strain ATCC 700825 / FA 1090).